Consider the following 496-residue polypeptide: GTPase Der (496 aa).

EngA-type G domains follow at residues 3-166 and 209-382; these read PVIA…VGKF and VKLA…TCAT. GTP is bound by residues 9–16, 56–60, 118–121, 215–222, 262–266, and 327–330; these read GRPNVGKS, DTGGI, NKTD, DTAGV, and NKWD. One can recognise a KH-like domain in the interval 383-467; the sequence is RRVGTSMLTR…PIRIQFKEGE (85 aa).

Belongs to the TRAFAC class TrmE-Era-EngA-EngB-Septin-like GTPase superfamily. EngA (Der) GTPase family. In terms of assembly, associates with the 50S ribosomal subunit.

GTPase that plays an essential role in the late steps of ribosome biogenesis. The chain is GTPase Der from Proteus mirabilis (strain HI4320).